The primary structure comprises 609 residues: NADH-ubiquinone oxidoreductase chain 5 (609 aa).

A run of 15 helical transmembrane segments spans residues 6 to 26 (SSIL…MTNL), 35 to 55 (YATS…LLFF), 84 to 104 (YFSI…MQFS), 116 to 138 (RFIK…NNLF), 140 to 160 (LFIG…WWYG), 171 to 191 (AILY…WFCL), 240 to 260 (TPVS…FLMI), 272 to 292 (IMTA…ICAL), 300 to 319 (IVAF…LGIN), 330 to 350 (THAF…HSLN), 365 to 385 (MPFT…MPFL), 409 to 429 (MITL…IYFV), 456 to 476 (LALG…PTNI), 481 to 501 (MPWH…AIAL), and 581 to 601 (GLIK…FILH).

It belongs to the complex I subunit 5 family. As to quaternary structure, core subunit of respiratory chain NADH dehydrogenase (Complex I) which is composed of 45 different subunits.

It is found in the mitochondrion inner membrane. The enzyme catalyses a ubiquinone + NADH + 5 H(+)(in) = a ubiquinol + NAD(+) + 4 H(+)(out). In terms of biological role, core subunit of the mitochondrial membrane respiratory chain NADH dehydrogenase (Complex I) which catalyzes electron transfer from NADH through the respiratory chain, using ubiquinone as an electron acceptor. Essential for the catalytic activity and assembly of complex I. The chain is NADH-ubiquinone oxidoreductase chain 5 from Rattus norvegicus (Rat).